We begin with the raw amino-acid sequence, 55 residues long: uncharacterized protein (55 aa).

This is an uncharacterized protein from Mycoplasma mycoides.